The chain runs to 486 residues: Glucose-6-phosphate 1-dehydrogenase (486 aa).

NADP(+) is bound by residues 13 to 20 (GGTGDLAK), arginine 47, 86 to 87 (DV), and lysine 149. Histidine 179, lysine 183, glutamate 217, and aspartate 236 together coordinate substrate. Histidine 241 functions as the Proton acceptor in the catalytic mechanism. Residues lysine 339 and lysine 344 each contribute to the substrate site.

Belongs to the glucose-6-phosphate dehydrogenase family. As to quaternary structure, homodimer.

It carries out the reaction D-glucose 6-phosphate + NAD(+) = 6-phospho-D-glucono-1,5-lactone + NADH + H(+). It catalyses the reaction D-glucose 6-phosphate + NADP(+) = 6-phospho-D-glucono-1,5-lactone + NADPH + H(+). Its pathway is carbohydrate degradation; pentose phosphate pathway; D-ribulose 5-phosphate from D-glucose 6-phosphate (oxidative stage): step 1/3. In terms of biological role, catalyzes the oxidation of glucose 6-phosphate to 6-phosphogluconolactone. Can utilize either NADP(+) or NAD(+). In Leuconostoc mesenteroides, this protein is Glucose-6-phosphate 1-dehydrogenase.